The sequence spans 323 residues: tRNA dimethylallyltransferase (323 aa).

12–19 serves as a coordination point for ATP; the sequence is GPTAAGKT. 14–19 provides a ligand contact to substrate; it reads TAAGKT. Interaction with substrate tRNA regions lie at residues 37 to 40 and 161 to 165; these read DSAL and QRLSR.

The protein belongs to the IPP transferase family. Monomer. It depends on Mg(2+) as a cofactor.

The catalysed reaction is adenosine(37) in tRNA + dimethylallyl diphosphate = N(6)-dimethylallyladenosine(37) in tRNA + diphosphate. Its function is as follows. Catalyzes the transfer of a dimethylallyl group onto the adenine at position 37 in tRNAs that read codons beginning with uridine, leading to the formation of N6-(dimethylallyl)adenosine (i(6)A). The chain is tRNA dimethylallyltransferase from Pseudomonas fluorescens (strain Pf0-1).